The following is a 206-amino-acid chain: Large ribosomal subunit protein uL4 (206 aa).

The tract at residues 49 to 73 (KTKTISEISGTTKKPFAQKGGGRAR) is disordered.

Belongs to the universal ribosomal protein uL4 family. Part of the 50S ribosomal subunit.

In terms of biological role, one of the primary rRNA binding proteins, this protein initially binds near the 5'-end of the 23S rRNA. It is important during the early stages of 50S assembly. It makes multiple contacts with different domains of the 23S rRNA in the assembled 50S subunit and ribosome. Its function is as follows. Forms part of the polypeptide exit tunnel. The sequence is that of Large ribosomal subunit protein uL4 from Paramagnetospirillum magneticum (strain ATCC 700264 / AMB-1) (Magnetospirillum magneticum).